Here is a 608-residue protein sequence, read N- to C-terminus: Glutamine--fructose-6-phosphate aminotransferase [isomerizing] (608 aa).

The active-site Nucleophile; for GATase activity is C2. Positions C2–A217 constitute a Glutamine amidotransferase type-2 domain. SIS domains are found at residues L284–K423 and L456–P598. K603 (for Fru-6P isomerization activity) is an active-site residue.

Its subcellular location is the cytoplasm. It carries out the reaction D-fructose 6-phosphate + L-glutamine = D-glucosamine 6-phosphate + L-glutamate. In terms of biological role, involved in the production of the root hair deformation (HAD) factor specifically on soybean. The protein is Glutamine--fructose-6-phosphate aminotransferase [isomerizing] (nodM) of Bradyrhizobium diazoefficiens (strain JCM 10833 / BCRC 13528 / IAM 13628 / NBRC 14792 / USDA 110).